Here is an 898-residue protein sequence, read N- to C-terminus: MPFYDNVYYPYPSDPPGTHSSAGIPSLLSSPQSQPSSGSQSRPAPSTMSGPLTSSGASTSIPPPFKFRSRRENVDWRRINAVDVDRVACEMDFQALQEHINAVTFCSVEGERCHRCQSPVDPALIKLFRLAQLTVEYLLHSQDCLSISLQAAEERLLAEAREREQICVQLQKKTQDAKALKEELKQRKKIIASQQAMFSAGISANYHKCQHCEKAFMNASFLQSHMQRRHPSEFDMKLMTDNQKKIQTVKLQDEINKLQEQLTLVTSQMETQQKDYTAKQEKELIQRQEEFKRQLEIWKEEEKMRMNSKIDEVKQACQRDMDSINQRNRNLETELLKLQQKNIQESMQSVQTQPNASTSNEHWQEVVKLQQKLHKQEVKWTGKMQKMKEDHDREKSLLQEELCKVSSAVSEGMEESRRQVQELSHRLQEQQQIITSQNKQMKQISSKPPTITVQREGVSTPSPETKAKVVVSEQSNSVHKLDPIVELSEEDKDSSSISESPTENRSWQKEVQELLKNPGLRRDMRLAAQHNLDDRLQSLGIKGVSGLSKNLYKSSMTQIISDRRKKLEEDPVYRRALKEISHKLEQRVKERNTEQPVKSKLHEQVVQSRPRSSSFPSTVTRVMSGPASKQQRTPQPVPRSRTNVPHKTSTPLQHRRTPPFSSDEDSSEEEEEEEEEEESSDEESPQMQKKTVLVNSSTAKAQNTAKTQSTAQSVRSAVALTSAEPTNVTTLSDSDWTDGSEMEEINLSQLHKHTDQNGNLKNVTHSNVKALGKSLEKQLAARGPKKPAGGVNTFLEKPTDVRNTRQNAKKELKYSDDDDDDDDDWDISSLEDVPAVAKPTQCPVPVRKSLDKSQDTSTSVWGSSTGKGHKPGLTDAGTASTLKSSLVTVSDWDDSDEI.

The interval 14–66 is disordered; that stretch reads DPPGTHSSAGIPSLLSSPQSQPSSGSQSRPAPSTMSGPLTSSGASTSIPPPFK. Residues 25–46 show a composition bias toward low complexity; the sequence is PSLLSSPQSQPSSGSQSRPAPS. Residues 47–60 show a composition bias toward polar residues; the sequence is TMSGPLTSSGASTS. The stretch at 145–197 forms a coiled coil; it reads LSISLQAAEERLLAEAREREQICVQLQKKTQDAKALKEELKQRKKIIASQQAM. Residues 207-230 form a C2H2-type zinc finger; it reads HKCQHCEKAFMNASFLQSHMQRRH. Coiled-coil stretches lie at residues 242-353 and 407-447; these read NQKK…VQTQ and SAVS…ISSK. The segment covering 435-463 has biased composition (polar residues); the sequence is TSQNKQMKQISSKPPTITVQREGVSTPSP. Disordered regions lie at residues 435 to 509, 585 to 739, and 773 to 878; these read TSQN…SWQK, EQRV…WTDG, and KSLE…DAGT. Low complexity predominate over residues 495-505; that stretch reads SSISESPTENR. Residues 573-590 adopt a coiled-coil conformation; sequence YRRALKEISHKLEQRVKE. Polar residues predominate over residues 605–652; that stretch reads VVQSRPRSSSFPSTVTRVMSGPASKQQRTPQPVPRSRTNVPHKTSTPL. Positions 662–684 are enriched in acidic residues; sequence SDEDSSEEEEEEEEEEESSDEES. Composition is skewed to polar residues over residues 685 to 715 and 723 to 734; these read PQMQ…QSVR and AEPTNVTTLSDS. The segment covering 797–815 has biased composition (basic and acidic residues); sequence KPTDVRNTRQNAKKELKYS. Residues 816-826 are compositionally biased toward acidic residues; that stretch reads DDDDDDDDDWD. The span at 855 to 866 shows a compositional bias: polar residues; the sequence is DTSTSVWGSSTG.

It belongs to the DZIP C2H2-type zinc-finger protein family. Expressed throughout the embryo starting at 12 hours.

It is found in the cell projection. It localises to the cilium. The protein localises to the cytoplasm. Its subcellular location is the cytoskeleton. The protein resides in the cilium basal body. It is found in the microtubule organizing center. It localises to the centrosome. The protein localises to the centriole. Its subcellular location is the nucleus. Its function is as follows. Molecular adapter that recruits protein complexes required for cilium assembly and function to the cilium basal body. Required for establishment of left-right asymmetry during embryogenesis. Acts as a permissive factor that is required for the proper regulation of Hedgehog (Hh) target genes in response to Hh signals. Acts downstream of the Smoothened protein to modulate Gli activity in the somites of the developing embryo. The protein is Cilium assembly protein DZIP1 (dzip1) of Danio rerio (Zebrafish).